Consider the following 373-residue polypeptide: Secondary metabolism regulator laeA (373 aa).

A disordered region spans residues 55–81; sequence ERDPAAGRWHANGSPSINSTSSKNPDR. Polar residues predominate over residues 67–77; the sequence is GSPSINSTSSK.

This sequence belongs to the methyltransferase superfamily. LaeA methyltransferase family. As to quaternary structure, component of the heterotrimeric velvet complex composed of laeA, veA and velB; VeA acting as a bridging protein between laeA and velB.

Its subcellular location is the nucleus. The catalysed reaction is L-methionyl-[protein] + S-adenosyl-L-methionine = S-methyl-L-methionyl-[protein] + S-adenosyl-L-homocysteine. In terms of biological role, methyltransferase that performs automethylation. No other methyl-accepting substrate has been identified yet. Component of the velvet transcription factor complex that acts as a global regulator for secondary metabolite gene expression. Positively controls expression of 20% to 40% of major classes of secondary metabolite biosynthesis genes such as nonribosomal peptide synthetases, polyketide synthases, and P450 monooxygenases. Controls the expression of the gliotoxin gene cluster. Controls the expression of the fumitremorgin, fumagillin, and pseurotin gene clusters, where genes for fumagillin and pseurotin are physically intertwined in a single supercluster. Regulates the biosynthetic genes required for endocrocin production. Secondary metabolites under the transcriptional regulation of laeA are necessary for inhibition of angiogenesis during invasive infection in mice. Controls the expression of cell surface rodA, a hydrophobin that acts as an antiphagocytic molecule. Also regulates the expression of genes involved in conidial biosynthesis. The polypeptide is Secondary metabolism regulator laeA (Aspergillus fumigatus (strain ATCC MYA-4609 / CBS 101355 / FGSC A1100 / Af293) (Neosartorya fumigata)).